The sequence spans 131 residues: Ribonuclease VapC4 (131 aa).

A PINc domain is found at 4 to 106 (IVPDTNFLIY…IVATNDKELK (103 aa)). Residues Asp-7 and Asp-102 each contribute to the Mg(2+) site.

It belongs to the PINc/VapC protein family. Requires Mg(2+) as cofactor.

Functionally, toxic component of a type II toxin-antitoxin (TA) system. An RNase. Its cognate antitoxin is VapB4. The protein is Ribonuclease VapC4 of Methanocaldococcus jannaschii (strain ATCC 43067 / DSM 2661 / JAL-1 / JCM 10045 / NBRC 100440) (Methanococcus jannaschii).